Consider the following 1290-residue polypeptide: DNA-directed RNA polymerase subunit beta' (1290 aa).

Residues C68, C70, C83, and C86 each coordinate Zn(2+). Mg(2+) is bound by residues D530, D532, and D534. Zn(2+)-binding residues include C909, C985, C992, and C995.

It belongs to the RNA polymerase beta' chain family. In terms of assembly, the RNAP catalytic core consists of 2 alpha, 1 beta, 1 beta' and 1 omega subunit. When a sigma factor is associated with the core the holoenzyme is formed, which can initiate transcription. Requires Mg(2+) as cofactor. Zn(2+) serves as cofactor.

The catalysed reaction is RNA(n) + a ribonucleoside 5'-triphosphate = RNA(n+1) + diphosphate. DNA-dependent RNA polymerase catalyzes the transcription of DNA into RNA using the four ribonucleoside triphosphates as substrates. The chain is DNA-directed RNA polymerase subunit beta' from Mycoplasma pneumoniae (strain ATCC 29342 / M129 / Subtype 1) (Mycoplasmoides pneumoniae).